The primary structure comprises 556 residues: PPE family protein PPE2 (556 aa).

The tract at residues 8–164 is PPE; sequence ASPPEVHSAL…ASYQAVSTAA (157 aa). Residues 201–256 are SH3-like; it reads QKIGYTDFYNNVIQPFINWLTNLPFLQAMFSGFDPWLPSLGNPLTFLSPANIAFAL. A leucine zipper motif region spans residues 319 to 340; sequence LEQTLALLPAALPLLAAPLAPL. Disordered stretches follow at residues 385-418 and 443-556; these read TPTPAPAPAPTAVTAPTPPPGPPPPPVTAPPPVT and GTGV…TRVE. Positions 400–417 are enriched in pro residues; sequence PTPPPGPPPPPVTAPPPV. Residues 456-471 show a composition bias toward low complexity; that stretch reads AEAPAAAAAPEEQVQP. The segment covering 472 to 481 has biased composition (basic residues); that stretch reads QRRRRPKIKQ. The Nuclear localization signal signature appears at 473-481; the sequence is RRRRPKIKQ.

This sequence belongs to the mycobacterial PPE family.

The protein resides in the secreted. It localises to the host cytoplasm. Its subcellular location is the host nucleus. In terms of biological role, inhibits nitric oxide (NO) production in activated macrophages. Acts by inhibiting expression of the host inducible nitric oxide synthase (iNOS). PPE2 is translocated into the host macrophage nucleus, where it interacts with a GATA-binding site overlapping with the TATA box of NOS2 (iNOS) promoter, and strongly inhibits NOS2 gene transcription. Reduction in NO production in turn facilitates intracellular survival of the bacilli inside the macrophage. In addition, disrupts the assembly of NADPH oxidase complex, which inhibits NADPH oxidase-mediated reactive oxygen species (ROS) generation in macrophages and favors M.tuberculosis survival. Acts by interacting with NCF2, the cytosolic subunit of NADPH oxidase, and preventing translocation of NCF2 and NCF1 to the membrane, which causes a reduction of the functional assembly of NADPH oxidase complex and a decrease in NADPH oxidase activity. This is PPE family protein PPE2 (PPE2) from Mycobacterium tuberculosis (strain ATCC 25618 / H37Rv).